Reading from the N-terminus, the 154-residue chain is MPKYYCDYCDTYLTHDSPSVRKTHCTGRKHKDNVKFYYQKWMEEQAQHLIDATTAAFKAGKIAQNPFSAGPPKPNVAIPPPSMGMPARPGMIPGMPAGAPPLLMGPGPMGMRPPMMMPMGMPPMGMGMRPPMMNGPPPQMNQKVYHNTDRRYHR.

The Matrin-type zinc-finger motif lies at 4–36 (YYCDYCDTYLTHDSPSVRKTHCTGRKHKDNVKF).

It belongs to the U1 small nuclear ribonucleoprotein C family. U1 snRNP is composed of the 7 core Sm proteins B/B', D1, D2, D3, E, F and G that assemble in a heptameric protein ring on the Sm site of the small nuclear RNA to form the core snRNP, and at least 3 U1 snRNP-specific proteins U1-70K, U1-A and U1-C. U1-C interacts with U1 snRNA and the 5' splice-site region of the pre-mRNA.

It is found in the nucleus. Functionally, component of the spliceosomal U1 snRNP, which is essential for recognition of the pre-mRNA 5' splice-site and the subsequent assembly of the spliceosome. U1-C is directly involved in initial 5' splice-site recognition for both constitutive and regulated alternative splicing. The interaction with the 5' splice-site seems to precede base-pairing between the pre-mRNA and the U1 snRNA. Stimulates commitment or early (E) complex formation by stabilizing the base pairing of the 5' end of the U1 snRNA and the 5' splice-site region. This Aedes aegypti (Yellowfever mosquito) protein is U1 small nuclear ribonucleoprotein C.